Consider the following 350-residue polypeptide: Ketol-acid reductoisomerase (NADP(+)) 2 (350 aa).

One can recognise a KARI N-terminal Rossmann domain in the interval 3-183 (ATIWYEKDAD…GALRAGAIKT (181 aa)). Residues 26-29 (YGSQ), R49, S52, S54, and 84-87 (DQYQ) each bind NADP(+). The active site involves H109. G135 is a binding site for NADP(+). Residues 184–327 (TFTEETETDL…PKLRAMFSWN (144 aa)) form the KARI C-terminal knotted domain. Residues D192, E196, E228, and E232 each contribute to the Mg(2+) site. S253 is a substrate binding site. A disordered region spans residues 331-350 (AKDKDETESFNGKIARTQVQ).

Belongs to the ketol-acid reductoisomerase family. Mg(2+) is required as a cofactor.

It carries out the reaction (2R)-2,3-dihydroxy-3-methylbutanoate + NADP(+) = (2S)-2-acetolactate + NADPH + H(+). It catalyses the reaction (2R,3R)-2,3-dihydroxy-3-methylpentanoate + NADP(+) = (S)-2-ethyl-2-hydroxy-3-oxobutanoate + NADPH + H(+). It functions in the pathway amino-acid biosynthesis; L-isoleucine biosynthesis; L-isoleucine from 2-oxobutanoate: step 2/4. Its pathway is amino-acid biosynthesis; L-valine biosynthesis; L-valine from pyruvate: step 2/4. Functionally, involved in the biosynthesis of branched-chain amino acids (BCAA). Catalyzes an alkyl-migration followed by a ketol-acid reduction of (S)-2-acetolactate (S2AL) to yield (R)-2,3-dihydroxy-isovalerate. In the isomerase reaction, S2AL is rearranged via a Mg-dependent methyl migration to produce 3-hydroxy-3-methyl-2-ketobutyrate (HMKB). In the reductase reaction, this 2-ketoacid undergoes a metal-dependent reduction by NADPH to yield (R)-2,3-dihydroxy-isovalerate. The protein is Ketol-acid reductoisomerase (NADP(+)) 2 of Bifidobacterium longum (strain NCC 2705).